The primary structure comprises 91 residues: Small ribosomal subunit protein bS6 (91 aa).

It belongs to the bacterial ribosomal protein bS6 family.

Functionally, binds together with bS18 to 16S ribosomal RNA. This is Small ribosomal subunit protein bS6 from Leptospira interrogans serogroup Icterohaemorrhagiae serovar copenhageni (strain Fiocruz L1-130).